The following is a 227-amino-acid chain: Cytochrome c oxidase subunit 2 (227 aa).

At 1-14 (MAHAAQVGLQDATS) the chain is on the mitochondrial intermembrane side. A helical transmembrane segment spans residues 15-45 (PIMEELITFHDHALMIIFLICFLVLYALFLT). The Mitochondrial matrix portion of the chain corresponds to 46-59 (LTTKLTSTNISDAQ). A helical membrane pass occupies residues 60-87 (EMETIWTILPAIILVLIALPSLRILYMT). The Mitochondrial intermembrane segment spans residues 88-227 (DEINDPSFTI…IFEMGPVFAL (140 aa)). The Cu cation site is built by His-161, Cys-196, Glu-198, Cys-200, His-204, and Met-207. Mg(2+) is bound at residue Glu-198.

It belongs to the cytochrome c oxidase subunit 2 family. Component of the cytochrome c oxidase (complex IV, CIV), a multisubunit enzyme composed of 14 subunits. The complex is composed of a catalytic core of 3 subunits MT-CO1, MT-CO2 and MT-CO3, encoded in the mitochondrial DNA, and 11 supernumerary subunits COX4I, COX5A, COX5B, COX6A, COX6B, COX6C, COX7A, COX7B, COX7C, COX8 and NDUFA4, which are encoded in the nuclear genome. The complex exists as a monomer or a dimer and forms supercomplexes (SCs) in the inner mitochondrial membrane with NADH-ubiquinone oxidoreductase (complex I, CI) and ubiquinol-cytochrome c oxidoreductase (cytochrome b-c1 complex, complex III, CIII), resulting in different assemblies (supercomplex SCI(1)III(2)IV(1) and megacomplex MCI(2)III(2)IV(2)). Found in a complex with TMEM177, COA6, COX18, COX20, SCO1 and SCO2. Interacts with TMEM177 in a COX20-dependent manner. Interacts with COX20. Interacts with COX16. It depends on Cu cation as a cofactor.

The protein resides in the mitochondrion inner membrane. It carries out the reaction 4 Fe(II)-[cytochrome c] + O2 + 8 H(+)(in) = 4 Fe(III)-[cytochrome c] + 2 H2O + 4 H(+)(out). Its function is as follows. Component of the cytochrome c oxidase, the last enzyme in the mitochondrial electron transport chain which drives oxidative phosphorylation. The respiratory chain contains 3 multisubunit complexes succinate dehydrogenase (complex II, CII), ubiquinol-cytochrome c oxidoreductase (cytochrome b-c1 complex, complex III, CIII) and cytochrome c oxidase (complex IV, CIV), that cooperate to transfer electrons derived from NADH and succinate to molecular oxygen, creating an electrochemical gradient over the inner membrane that drives transmembrane transport and the ATP synthase. Cytochrome c oxidase is the component of the respiratory chain that catalyzes the reduction of oxygen to water. Electrons originating from reduced cytochrome c in the intermembrane space (IMS) are transferred via the dinuclear copper A center (CU(A)) of subunit 2 and heme A of subunit 1 to the active site in subunit 1, a binuclear center (BNC) formed by heme A3 and copper B (CU(B)). The BNC reduces molecular oxygen to 2 water molecules using 4 electrons from cytochrome c in the IMS and 4 protons from the mitochondrial matrix. This is Cytochrome c oxidase subunit 2 (MT-CO2) from Gorilla gorilla gorilla (Western lowland gorilla).